We begin with the raw amino-acid sequence, 674 residues long: UvrABC system protein B (674 aa).

Residues 26 to 414 (EGLDSGLAHQ…SGNDIAEQVV (389 aa)) form the Helicase ATP-binding domain. 39-46 (GVTGSGKT) provides a ligand contact to ATP. A Beta-hairpin motif is present at residues 92 to 115 (YYDYYQPEAYVPTTDTFIEKDASV). The Helicase C-terminal domain maps to 432-586 (QVDDLLSEIR…ALHNKKNGIT (155 aa)). The UVR domain maps to 634–669 (ELEIQRLETEMYDLAQNLEFEKAAEARDKIHTLRQQ).

It belongs to the UvrB family. In terms of assembly, forms a heterotetramer with UvrA during the search for lesions. Interacts with UvrC in an incision complex.

It localises to the cytoplasm. Its function is as follows. The UvrABC repair system catalyzes the recognition and processing of DNA lesions. A damage recognition complex composed of 2 UvrA and 2 UvrB subunits scans DNA for abnormalities. Upon binding of the UvrA(2)B(2) complex to a putative damaged site, the DNA wraps around one UvrB monomer. DNA wrap is dependent on ATP binding by UvrB and probably causes local melting of the DNA helix, facilitating insertion of UvrB beta-hairpin between the DNA strands. Then UvrB probes one DNA strand for the presence of a lesion. If a lesion is found the UvrA subunits dissociate and the UvrB-DNA preincision complex is formed. This complex is subsequently bound by UvrC and the second UvrB is released. If no lesion is found, the DNA wraps around the other UvrB subunit that will check the other stand for damage. The chain is UvrABC system protein B from Photobacterium profundum (strain SS9).